The primary structure comprises 372 residues: Pre-small/secreted glycoprotein (372 aa).

An N-terminal signal peptide occupies residues 1 to 32 (MEGLSLLQLPRDKFRKSSFFVWVIILFQKAFS). A glycan (N-linked (GlcNAc...) asparagine; by host) is linked at N40. Cystine bridges form between C108–C135 and C121–C147. 5 N-linked (GlcNAc...) asparagine; by host glycosylation sites follow: N204, N208, N238, N257, and N268. The disordered stretch occupies residues 320-340 (MRHRRELQREESPTGPPGSIR).

The protein belongs to the filoviruses glycoprotein family. Homodimer; disulfide-linked. The homodimers are linked by two disulfide bonds in a parallel orientation. As to quaternary structure, monomer. In terms of processing, this precursor is processed into mature sGP and delta-peptide by host furin or furin-like proteases. The cleavage site corresponds to the furin optimal cleavage sequence [KR]-X-[KR]-R. N-glycosylated. Post-translationally, O-glycosylated.

The protein localises to the secreted. Its function is as follows. Seems to possess an anti-inflammatory activity as it can reverse the barrier-decreasing effects of TNF alpha. Might therefore contribute to the lack of inflammatory reaction seen during infection in spite the of extensive necrosis and massive virus production. Does not seem to be involved in activation of primary macrophages. Does not seem to interact specifically with neutrophils. Viroporin that permeabilizes mammalian cell plasma membranes. It acts by altering permeation of ionic compounds and small molecules. This activity may lead to viral enterotoxic activity. In Sudan ebolavirus (strain Boniface-76) (SEBOV), this protein is Pre-small/secreted glycoprotein (GP).